The primary structure comprises 115 residues: uncharacterized protein (115 aa).

Positions 1–115 (MGVEISLDPP…ETVIKLSAAE (115 aa)) constitute an MSP domain.

This is an uncharacterized protein from Caenorhabditis elegans.